Here is a 306-residue protein sequence, read N- to C-terminus: Ribosomal RNA small subunit methyltransferase H (306 aa).

S-adenosyl-L-methionine is bound by residues 33 to 35 (GGY), Asp-51, Phe-78, Asp-96, and Gln-103.

The protein belongs to the methyltransferase superfamily. RsmH family.

The protein localises to the cytoplasm. The enzyme catalyses cytidine(1402) in 16S rRNA + S-adenosyl-L-methionine = N(4)-methylcytidine(1402) in 16S rRNA + S-adenosyl-L-homocysteine + H(+). Its function is as follows. Specifically methylates the N4 position of cytidine in position 1402 (C1402) of 16S rRNA. The protein is Ribosomal RNA small subunit methyltransferase H of Rickettsia prowazekii (strain Madrid E).